A 137-amino-acid polypeptide reads, in one-letter code: Ribonuclease P protein component (137 aa).

Belongs to the RnpA family. As to quaternary structure, consists of a catalytic RNA component (M1 or rnpB) and a protein subunit.

The catalysed reaction is Endonucleolytic cleavage of RNA, removing 5'-extranucleotides from tRNA precursor.. Its function is as follows. RNaseP catalyzes the removal of the 5'-leader sequence from pre-tRNA to produce the mature 5'-terminus. It can also cleave other RNA substrates such as 4.5S RNA. The protein component plays an auxiliary but essential role in vivo by binding to the 5'-leader sequence and broadening the substrate specificity of the ribozyme. The protein is Ribonuclease P protein component of Porphyromonas gingivalis (strain ATCC 33277 / DSM 20709 / CIP 103683 / JCM 12257 / NCTC 11834 / 2561).